The sequence spans 57 residues: Large ribosomal subunit protein bL32 (57 aa).

This sequence belongs to the bacterial ribosomal protein bL32 family.

This chain is Large ribosomal subunit protein bL32, found in Staphylococcus epidermidis (strain ATCC 35984 / DSM 28319 / BCRC 17069 / CCUG 31568 / BM 3577 / RP62A).